The following is a 178-amino-acid chain: Large ribosomal subunit protein bL25 (178 aa).

Belongs to the bacterial ribosomal protein bL25 family. CTC subfamily. Part of the 50S ribosomal subunit; part of the 5S rRNA/L5/L18/L25 subcomplex. Contacts the 5S rRNA. Binds to the 5S rRNA independently of L5 and L18.

Functionally, this is one of the proteins that binds to the 5S RNA in the ribosome where it forms part of the central protuberance. The sequence is that of Large ribosomal subunit protein bL25 from Wolinella succinogenes (strain ATCC 29543 / DSM 1740 / CCUG 13145 / JCM 31913 / LMG 7466 / NCTC 11488 / FDC 602W) (Vibrio succinogenes).